Reading from the N-terminus, the 309-residue chain is Porphobilinogen deaminase (309 aa).

Cys242 carries the S-(dipyrrolylmethanemethyl)cysteine modification.

Belongs to the HMBS family. In terms of assembly, monomer. Dipyrromethane is required as a cofactor.

It carries out the reaction 4 porphobilinogen + H2O = hydroxymethylbilane + 4 NH4(+). It functions in the pathway porphyrin-containing compound metabolism; protoporphyrin-IX biosynthesis; coproporphyrinogen-III from 5-aminolevulinate: step 2/4. Its function is as follows. Tetrapolymerization of the monopyrrole PBG into the hydroxymethylbilane pre-uroporphyrinogen in several discrete steps. The sequence is that of Porphobilinogen deaminase from Shewanella frigidimarina (strain NCIMB 400).